Consider the following 1278-residue polypeptide: Papilin (1278 aa).

Residues 1-18 (MRLLLLVPLLLAPAPGSS) form the signal peptide. 5 TSP type-1 domains span residues 26–80 (SDTW…ESCP), 304–361 (PGFS…HPCP), 362–421 (ETKR…ACNL), 423–481 (RCAA…EDCP), and 484–539 (SDQA…QPCH). 6 disulfides stabilise this stretch: Cys38/Cys74, Cys42/Cys79, Cys53/Cys64, Cys316/Cys355, Cys320/Cys360, and Cys331/Cys343. A disordered region spans residues 544–632 (VPSMQDVHTP…SGSGPHDCRH (89 aa)). A compositionally biased stretch (basic and acidic residues) spans 582-599 (PSARGDHRGERGDPRGDQ). The span at 608–620 (PAPSLQQPPYQQP) shows a compositional bias: low complexity. 3 cysteine pairs are disulfide-bonded: Cys754-Cys804, Cys763-Cys787, and Cys779-Cys800. The BPTI/Kunitz inhibitor domain maps to 754–804 (CLLPSAHGSCADWAARWYFVASVGQCNRFWYGGCHGNANNFASEQECMSSC). Residues 805–901 (QGSLHGPRRP…GGDAGSPAPP (97 aa)) are disordered. Ig-like C2-type domains are found at residues 900 to 995 (PPFH…LRII), 1033 to 1128 (PSSH…VQLR), and 1133 to 1218 (LTIS…TEVK). Cys931 and Cys978 are disulfide-bonded. Residues 1014-1042 (RDPAQDFGQAGAAGPLGAIPSSHPQPANR) are disordered. Intrachain disulfides connect Cys1065-Cys1112 and Cys1154-Cys1202. Residues 1231–1270 (PGRDCVDQPELANCDLILQAQLCGNEYYSSFCCASCSRFQ) enclose the PLAC domain.

This sequence belongs to the papilin family.

It localises to the secreted. This chain is Papilin (PAPLN), found in Homo sapiens (Human).